The following is a 225-amino-acid chain: ATP synthase F(0) complex subunit a (225 aa).

6 helical membrane passes run 10 to 30 (PSLLGISLLMPALLMTTILLL), 69 to 89 (LILISLLILLSLTNLLGLLPY), 96 to 116 (QLSMNMAIALPLWLVTVLIGL), 135 to 155 (LLIPILILIETISLLIRPIAL), 168 to 188 (LLIQLISIATLNLWFMMPPLS), and 194 to 214 (VLILLLLLEFAVAMIQAYVFV).

This sequence belongs to the ATPase A chain family. In terms of assembly, component of the ATP synthase complex composed at least of ATP5F1A/subunit alpha, ATP5F1B/subunit beta, ATP5MC1/subunit c (homooctomer), MT-ATP6/subunit a, MT-ATP8/subunit 8, ATP5ME/subunit e, ATP5MF/subunit f, ATP5MG/subunit g, ATP5MK/subunit k, ATP5MJ/subunit j, ATP5F1C/subunit gamma, ATP5F1D/subunit delta, ATP5F1E/subunit epsilon, ATP5PF/subunit F6, ATP5PB/subunit b, ATP5PD/subunit d, ATP5PO/subunit OSCP. ATP synthase complex consists of a soluble F(1) head domain (subunits alpha(3) and beta(3)) - the catalytic core - and a membrane F(0) domain - the membrane proton channel (subunits c, a, 8, e, f, g, k and j). These two domains are linked by a central stalk (subunits gamma, delta, and epsilon) rotating inside the F1 region and a stationary peripheral stalk (subunits F6, b, d, and OSCP). Interacts with DNAJC30; interaction is direct.

Its subcellular location is the mitochondrion inner membrane. The catalysed reaction is H(+)(in) = H(+)(out). Its function is as follows. Subunit a, of the mitochondrial membrane ATP synthase complex (F(1)F(0) ATP synthase or Complex V) that produces ATP from ADP in the presence of a proton gradient across the membrane which is generated by electron transport complexes of the respiratory chain. ATP synthase complex consist of a soluble F(1) head domain - the catalytic core - and a membrane F(1) domain - the membrane proton channel. These two domains are linked by a central stalk rotating inside the F(1) region and a stationary peripheral stalk. During catalysis, ATP synthesis in the catalytic domain of F(1) is coupled via a rotary mechanism of the central stalk subunits to proton translocation. With the subunit c (ATP5MC1), forms the proton-conducting channel in the F(0) domain, that contains two crucial half-channels (inlet and outlet) that facilitate proton movement from the mitochondrial intermembrane space (IMS) into the matrix. Protons are taken up via the inlet half-channel and released through the outlet half-channel, following a Grotthuss mechanism. The sequence is that of ATP synthase F(0) complex subunit a from Alligator mississippiensis (American alligator).